Consider the following 916-residue polypeptide: Isoleucine--tRNA ligase (916 aa).

A 'HIGH' region motif is present at residues 57 to 67; the sequence is PYANGNLHMGH. E554 contacts L-isoleucyl-5'-AMP. The 'KMSKS' region signature appears at 595 to 599; sequence KMSKS. K598 is an ATP binding site. Zn(2+)-binding residues include C885, C888, C905, and C908.

It belongs to the class-I aminoacyl-tRNA synthetase family. IleS type 1 subfamily. As to quaternary structure, monomer. Zn(2+) is required as a cofactor.

It is found in the cytoplasm. It catalyses the reaction tRNA(Ile) + L-isoleucine + ATP = L-isoleucyl-tRNA(Ile) + AMP + diphosphate. In terms of biological role, catalyzes the attachment of isoleucine to tRNA(Ile). As IleRS can inadvertently accommodate and process structurally similar amino acids such as valine, to avoid such errors it has two additional distinct tRNA(Ile)-dependent editing activities. One activity is designated as 'pretransfer' editing and involves the hydrolysis of activated Val-AMP. The other activity is designated 'posttransfer' editing and involves deacylation of mischarged Val-tRNA(Ile). This is Isoleucine--tRNA ligase from Staphylococcus saprophyticus subsp. saprophyticus (strain ATCC 15305 / DSM 20229 / NCIMB 8711 / NCTC 7292 / S-41).